Reading from the N-terminus, the 153-residue chain is L-alanine exporter AlaE (153 aa).

4 consecutive transmembrane segments (helical) span residues 16 to 36 (VAMV…LSEM), 42 to 62 (LSSR…YGLY), 86 to 106 (LFAY…AIGA), and 114 to 134 (AVGS…YFLE).

Belongs to the AlaE exporter family.

It localises to the cell inner membrane. Functionally, exports L-alanine. The protein is L-alanine exporter AlaE of Musicola paradisiaca (strain Ech703) (Dickeya paradisiaca).